A 123-amino-acid polypeptide reads, in one-letter code: Transmembrane protein 80 (123 aa).

4 helical membrane passes run 2 to 22 (LFHLSGLYSALYFLATLLMIV), 35 to 55 (LALDLVLLLLMGILKVAQLYL), 68 to 88 (LAASLAFTAVGGLLSVHFLLW), and 102 to 122 (VLLVLHGLEAGLQVVVIADFI).

It localises to the membrane. Its subcellular location is the cell projection. The protein localises to the cilium. The chain is Transmembrane protein 80 (Tmem80) from Mus musculus (Mouse).